A 128-amino-acid chain; its full sequence is Large ribosomal subunit protein uL22 (128 aa).

Belongs to the universal ribosomal protein uL22 family. In terms of assembly, part of the 50S ribosomal subunit.

In terms of biological role, this protein binds specifically to 23S rRNA; its binding is stimulated by other ribosomal proteins, e.g. L4, L17, and L20. It is important during the early stages of 50S assembly. It makes multiple contacts with different domains of the 23S rRNA in the assembled 50S subunit and ribosome. The globular domain of the protein is located near the polypeptide exit tunnel on the outside of the subunit, while an extended beta-hairpin is found that lines the wall of the exit tunnel in the center of the 70S ribosome. This Rhodopseudomonas palustris (strain BisB18) protein is Large ribosomal subunit protein uL22.